The following is a 299-amino-acid chain: Phosphoribosylaminoimidazole-succinocarboxamide synthase (299 aa).

This sequence belongs to the SAICAR synthetase family.

It carries out the reaction 5-amino-1-(5-phospho-D-ribosyl)imidazole-4-carboxylate + L-aspartate + ATP = (2S)-2-[5-amino-1-(5-phospho-beta-D-ribosyl)imidazole-4-carboxamido]succinate + ADP + phosphate + 2 H(+). The protein operates within purine metabolism; IMP biosynthesis via de novo pathway; 5-amino-1-(5-phospho-D-ribosyl)imidazole-4-carboxamide from 5-amino-1-(5-phospho-D-ribosyl)imidazole-4-carboxylate: step 1/2. This is Phosphoribosylaminoimidazole-succinocarboxamide synthase from Maridesulfovibrio salexigens (strain ATCC 14822 / DSM 2638 / NCIMB 8403 / VKM B-1763) (Desulfovibrio salexigens).